Here is a 357-residue protein sequence, read N- to C-terminus: Protein-glutamate methylesterase/protein-glutamine glutaminase (357 aa).

The Response regulatory domain occupies 3–120 (RVLVVDDSAF…SIDLYKVRDM (118 aa)). At D54 the chain carries 4-aspartylphosphate. Residues 161-355 (FRAGKQLICI…AAIMTYMKKE (195 aa)) enclose the CheB-type methylesterase domain. Active-site residues include S173, H200, and D296.

It belongs to the CheB family. Phosphorylated by CheA. Phosphorylation of the N-terminal regulatory domain activates the methylesterase activity.

The protein localises to the cytoplasm. The catalysed reaction is [protein]-L-glutamate 5-O-methyl ester + H2O = L-glutamyl-[protein] + methanol + H(+). It carries out the reaction L-glutaminyl-[protein] + H2O = L-glutamyl-[protein] + NH4(+). Its function is as follows. Involved in chemotaxis. Part of a chemotaxis signal transduction system that modulates chemotaxis in response to various stimuli. Catalyzes the demethylation of specific methylglutamate residues introduced into the chemoreceptors (methyl-accepting chemotaxis proteins or MCP) by CheR. Also mediates the irreversible deamidation of specific glutamine residues to glutamic acid. This chain is Protein-glutamate methylesterase/protein-glutamine glutaminase, found in Bacillus licheniformis (strain ATCC 14580 / DSM 13 / JCM 2505 / CCUG 7422 / NBRC 12200 / NCIMB 9375 / NCTC 10341 / NRRL NRS-1264 / Gibson 46).